The following is a 272-amino-acid chain: Phosphate import ATP-binding protein PstB (272 aa).

Residues 26–267 form the ABC transporter domain; the sequence is LDIKNLDLYY…PSEKQTEDYI (242 aa). 58-65 serves as a coordination point for ATP; sequence GPSGCGKS.

Belongs to the ABC transporter superfamily. Phosphate importer (TC 3.A.1.7) family. The complex is composed of two ATP-binding proteins (PstB), two transmembrane proteins (PstC and PstA) and a solute-binding protein (PstS).

The protein resides in the cell inner membrane. The catalysed reaction is phosphate(out) + ATP + H2O = ADP + 2 phosphate(in) + H(+). Functionally, part of the ABC transporter complex PstSACB involved in phosphate import. Responsible for energy coupling to the transport system. The protein is Phosphate import ATP-binding protein PstB of Idiomarina loihiensis (strain ATCC BAA-735 / DSM 15497 / L2-TR).